The primary structure comprises 298 residues: Ribosomal RNA small subunit methyltransferase H (298 aa).

S-adenosyl-L-methionine is bound by residues 46 to 48 (GGH), D65, F92, D108, and H115.

The protein belongs to the methyltransferase superfamily. RsmH family.

The protein resides in the cytoplasm. It carries out the reaction cytidine(1402) in 16S rRNA + S-adenosyl-L-methionine = N(4)-methylcytidine(1402) in 16S rRNA + S-adenosyl-L-homocysteine + H(+). Its function is as follows. Specifically methylates the N4 position of cytidine in position 1402 (C1402) of 16S rRNA. This is Ribosomal RNA small subunit methyltransferase H from Nostoc punctiforme (strain ATCC 29133 / PCC 73102).